Here is a 236-residue protein sequence, read N- to C-terminus: 2,3,4,5-tetrahydropyridine-2,6-dicarboxylate N-acetyltransferase (236 aa).

Belongs to the transferase hexapeptide repeat family. DapH subfamily.

It catalyses the reaction (S)-2,3,4,5-tetrahydrodipicolinate + acetyl-CoA + H2O = L-2-acetamido-6-oxoheptanedioate + CoA. The protein operates within amino-acid biosynthesis; L-lysine biosynthesis via DAP pathway; LL-2,6-diaminopimelate from (S)-tetrahydrodipicolinate (acetylase route): step 1/3. Catalyzes the transfer of an acetyl group from acetyl-CoA to tetrahydrodipicolinate. In Clostridium botulinum (strain ATCC 19397 / Type A), this protein is 2,3,4,5-tetrahydropyridine-2,6-dicarboxylate N-acetyltransferase.